We begin with the raw amino-acid sequence, 382 residues long: V-type proton ATPase subunit C 1 (382 aa).

Residue T2 is modified to N-acetylthreonine.

Belongs to the V-ATPase C subunit family. V-ATPase is a heteromultimeric enzyme made up of two complexes: the ATP-hydrolytic V1 complex and the proton translocation V0 complex. The V1 complex consists of three catalytic AB heterodimers that form a heterohexamer, three peripheral stalks each consisting of EG heterodimers, one central rotor including subunits D and F, and the regulatory subunits C and H. The proton translocation complex V0 consists of the proton transport subunit a, a ring of proteolipid subunits c9c'', rotary subunit d, subunits e and f, and two accessory subunits.

Subunit of the V1 complex of vacuolar(H+)-ATPase (V-ATPase), a multisubunit enzyme composed of a peripheral complex (V1) that hydrolyzes ATP and a membrane integral complex (V0) that translocates protons. V-ATPase is responsible for acidifying and maintaining the pH of intracellular compartments and in some cell types, is targeted to the plasma membrane, where it is responsible for acidifying the extracellular environment. Subunit C is necessary for the assembly of the catalytic sector of the enzyme and is likely to have a specific function in its catalytic activity. The protein is V-type proton ATPase subunit C 1 (atp6v1c1) of Xenopus tropicalis (Western clawed frog).